The following is a 393-amino-acid chain: S-adenosylmethionine synthase (393 aa).

Glu9 contributes to the Mg(2+) binding site. His15 is a binding site for ATP. Glu43 is a K(+) binding site. The L-methionine site is built by Glu56 and Gln99. ATP contacts are provided by residues 167 to 169 (DGK), 235 to 238 (SGRF), Asp246, 252 to 253 (RK), Ala269, Lys273, and Lys277. Asp246 is a binding site for L-methionine. Lys277 lines the L-methionine pocket.

Belongs to the AdoMet synthase family. Homotetramer. Mn(2+) serves as cofactor. It depends on Mg(2+) as a cofactor. Requires Co(2+) as cofactor. The cofactor is K(+).

It is found in the cytoplasm. It catalyses the reaction L-methionine + ATP + H2O = S-adenosyl-L-methionine + phosphate + diphosphate. The protein operates within amino-acid biosynthesis; S-adenosyl-L-methionine biosynthesis; S-adenosyl-L-methionine from L-methionine: step 1/1. Functionally, catalyzes the formation of S-adenosylmethionine from methionine and ATP. The reaction comprises two steps that are both catalyzed by the same enzyme: formation of S-adenosylmethionine (AdoMet) and triphosphate, and subsequent hydrolysis of the triphosphate. In Solanum palustre (Non-tuber-performing potato), this protein is S-adenosylmethionine synthase (SAMS).